Reading from the N-terminus, the 62-residue chain is MKIHIFLFVLFFFLVPIATRGVKCAVKDTYSCFIVRGKCRHECHDFEKPIGFCTKLNANCYM.

Positions 1–21 (MKIHIFLFVLFFFLVPIATRG) are cleaved as a signal peptide. 2 disulfide bridges follow: Cys32/Cys60 and Cys39/Cys53.

It belongs to the beta-defensin family.

The protein localises to the secreted. Its function is as follows. Has antibacterial activity. The polypeptide is Beta-defensin 133 (DEFB133) (Pan troglodytes (Chimpanzee)).